A 339-amino-acid chain; its full sequence is Phenylalanine--tRNA ligase alpha subunit (339 aa).

Glu-254 provides a ligand contact to Mg(2+).

Belongs to the class-II aminoacyl-tRNA synthetase family. Phe-tRNA synthetase alpha subunit type 1 subfamily. As to quaternary structure, tetramer of two alpha and two beta subunits. Requires Mg(2+) as cofactor.

The protein resides in the cytoplasm. It catalyses the reaction tRNA(Phe) + L-phenylalanine + ATP = L-phenylalanyl-tRNA(Phe) + AMP + diphosphate + H(+). The sequence is that of Phenylalanine--tRNA ligase alpha subunit from Clostridium novyi (strain NT).